A 127-amino-acid chain; its full sequence is Large ribosomal subunit protein uL22 (127 aa).

Part of the 50S ribosomal subunit.

This protein binds specifically to 23S rRNA; its binding is stimulated by other ribosomal proteins, e.g. L4, L17, and L20. It is important during the early stages of 50S assembly. It makes multiple contacts with different domains of the 23S rRNA in the assembled 50S subunit and ribosome. Its function is as follows. The globular domain of the protein is located near the polypeptide exit tunnel on the outside of the subunit, while an extended beta-hairpin is found that lines the wall of the exit tunnel in the center of the 70S ribosome. This is Large ribosomal subunit protein uL22 from Rhodopseudomonas palustris (strain ATCC BAA-98 / CGA009).